Reading from the N-terminus, the 488-residue chain is Probable malate:quinone oxidoreductase (488 aa).

Belongs to the MQO family. FAD is required as a cofactor.

It carries out the reaction (S)-malate + a quinone = a quinol + oxaloacetate. It functions in the pathway carbohydrate metabolism; tricarboxylic acid cycle; oxaloacetate from (S)-malate (quinone route): step 1/1. The protein is Probable malate:quinone oxidoreductase of Neisseria meningitidis serogroup C / serotype 2a (strain ATCC 700532 / DSM 15464 / FAM18).